The following is a 166-amino-acid chain: Phosphopantetheine adenylyltransferase (166 aa).

Thr-9 provides a ligand contact to substrate. ATP is bound by residues 9-10 (TF) and His-17. Substrate is bound by residues Lys-41, Leu-73, and Arg-87. ATP is bound by residues 88 to 90 (GLR), Glu-98, and 123 to 129 (YQFISGT).

This sequence belongs to the bacterial CoaD family. Homohexamer. The cofactor is Mg(2+).

It localises to the cytoplasm. The enzyme catalyses (R)-4'-phosphopantetheine + ATP + H(+) = 3'-dephospho-CoA + diphosphate. It functions in the pathway cofactor biosynthesis; coenzyme A biosynthesis; CoA from (R)-pantothenate: step 4/5. Reversibly transfers an adenylyl group from ATP to 4'-phosphopantetheine, yielding dephospho-CoA (dPCoA) and pyrophosphate. This is Phosphopantetheine adenylyltransferase from Burkholderia mallei (strain NCTC 10229).